A 34-amino-acid chain; its full sequence is MSDIN-like toxin proprotein 3 (34 aa).

A propeptide spanning residues 1-10 (MSDINVIRAP) is cleaved from the precursor. A cross-link (cyclopeptide (Leu-Pro)) is located at residues 11 to 18 (LLILSILP). The propeptide occupies 19–34 (CVGDDIEVLRRGEGLS).

Belongs to the MSDIN fungal toxin family. In terms of processing, processed by the macrocyclase-peptidase enzyme POPB to yield a toxic cyclic octapeptide. POPB first removes 10 residues from the N-terminus. Conformational trapping of the remaining peptide forces the enzyme to release this intermediate rather than proceed to macrocyclization. The enzyme rebinds the remaining peptide in a different conformation and catalyzes macrocyclization of the N-terminal 8 residues. In terms of tissue distribution, expressed in basidiocarps.

Probable toxin that belongs to the MSDIN-like toxin family responsible for a large number of food poisoning cases and deaths. The protein is MSDIN-like toxin proprotein 3 of Amanita exitialis (Guangzhou destroying angel).